We begin with the raw amino-acid sequence, 485 residues long: uncharacterized protein (485 aa).

The next 10 helical transmembrane spans lie at 9–29 (IFIS…LTHQ), 66–86 (PIID…ALAL), 98–118 (YITA…IENL), 131–151 (VAIS…NIII), 159–179 (FLSL…AFII), 194–214 (NTAS…YFIA), 259–279 (NYLI…VIVL), 293–313 (LLVV…MIFL), 322–342 (VLIG…YAFE), and 350–370 (IYFS…YNAI).

The protein localises to the host membrane. This is an uncharacterized protein from Salmonella typhimurium (Bacteriophage P22).